A 205-amino-acid chain; its full sequence is MSFTDDQSPVAEQNKKTPSEGHWFAVQVASGCEKRVKLNLEQRIHTLDVADRILQVEIPKTPIVKIRKDGARVQGEEKIFPGYVLIRMIMDDDAWQVVKNTPHVINFVGSEQKRHYGRGRGHVLPMPLSHGEVERIFRHVDEQEPVVKIDMEIGDHIMVLSGPFKDFEGDVIEVSPERSKLKALLSIFGRETPVELEFTQVEKQN.

The KOW domain maps to 154-178 (GDHIMVLSGPFKDFEGDVIEVSPER).

The protein belongs to the NusG family.

Functionally, participates in transcription elongation, termination and antitermination. The protein is Transcription termination/antitermination protein NusG of Synechocystis sp. (strain ATCC 27184 / PCC 6803 / Kazusa).